A 179-amino-acid chain; its full sequence is Adenine phosphoribosyltransferase (179 aa).

The protein belongs to the purine/pyrimidine phosphoribosyltransferase family. In terms of assembly, homodimer.

Its subcellular location is the cytoplasm. It carries out the reaction AMP + diphosphate = 5-phospho-alpha-D-ribose 1-diphosphate + adenine. The protein operates within purine metabolism; AMP biosynthesis via salvage pathway; AMP from adenine: step 1/1. Functionally, catalyzes a salvage reaction resulting in the formation of AMP, that is energically less costly than de novo synthesis. The sequence is that of Adenine phosphoribosyltransferase from Helicobacter pylori (strain J99 / ATCC 700824) (Campylobacter pylori J99).